A 495-amino-acid polypeptide reads, in one-letter code: Probable cytosol aminopeptidase (495 aa).

Mn(2+) contacts are provided by K261 and D266. Residue K273 is part of the active site. Residues D284, D343, and E345 each contribute to the Mn(2+) site. Residue R347 is part of the active site.

This sequence belongs to the peptidase M17 family. Mn(2+) serves as cofactor.

The protein resides in the cytoplasm. It catalyses the reaction Release of an N-terminal amino acid, Xaa-|-Yaa-, in which Xaa is preferably Leu, but may be other amino acids including Pro although not Arg or Lys, and Yaa may be Pro. Amino acid amides and methyl esters are also readily hydrolyzed, but rates on arylamides are exceedingly low.. It carries out the reaction Release of an N-terminal amino acid, preferentially leucine, but not glutamic or aspartic acids.. Presumably involved in the processing and regular turnover of intracellular proteins. Catalyzes the removal of unsubstituted N-terminal amino acids from various peptides. The chain is Probable cytosol aminopeptidase from Chelativorans sp. (strain BNC1).